Here is a 153-residue protein sequence, read N- to C-terminus: D-aminoacyl-tRNA deacylase (153 aa).

A Gly-cisPro motif, important for rejection of L-amino acids motif is present at residues 140-141; it reads GP.

The protein belongs to the DTD family. As to quaternary structure, homodimer.

It is found in the cytoplasm. The enzyme catalyses glycyl-tRNA(Ala) + H2O = tRNA(Ala) + glycine + H(+). The catalysed reaction is a D-aminoacyl-tRNA + H2O = a tRNA + a D-alpha-amino acid + H(+). Its function is as follows. An aminoacyl-tRNA editing enzyme that deacylates mischarged D-aminoacyl-tRNAs. Also deacylates mischarged glycyl-tRNA(Ala), protecting cells against glycine mischarging by AlaRS. Acts via tRNA-based rather than protein-based catalysis; rejects L-amino acids rather than detecting D-amino acids in the active site. By recycling D-aminoacyl-tRNA to D-amino acids and free tRNA molecules, this enzyme counteracts the toxicity associated with the formation of D-aminoacyl-tRNA entities in vivo and helps enforce protein L-homochirality. The polypeptide is D-aminoacyl-tRNA deacylase (Trichodesmium erythraeum (strain IMS101)).